The chain runs to 130 residues: Holin-like protein CidA (130 aa).

The next 4 membrane-spanning stretches (helical) occupy residues Phe-6 to Glu-26, Leu-31 to Phe-51, Phe-65 to Ala-85, and Ile-93 to Ile-113.

This sequence belongs to the CidA/LrgA family. CidA subfamily.

The protein resides in the cell membrane. In terms of biological role, increases the activity of extracellular murein hydrolases possibly by mediating their export via hole formation. Inhibited by the antiholin-like proteins LrgAB. In an unstressed cell, the LrgAB products probably inhibit the function of the CidAB proteins. When a cell is stressed by the addition of antibiotics or by other factors in the environment, the CidAB proteins possibly oligomerize within the bacterial cell membrane, creating lesions that disrupt the proton motive force, which in turn results in loss of cell viability. These lesions are also hypothesized to regulate the subsequent cell lysis by either allowing the murein hydrolases access to the cell wall substrate and/or regulating their activity by a possible change in the cell wall pH that results from loss of membrane potential. The sequence is that of Holin-like protein CidA from Staphylococcus epidermidis (strain ATCC 35984 / DSM 28319 / BCRC 17069 / CCUG 31568 / BM 3577 / RP62A).